A 260-amino-acid chain; its full sequence is MALRRPMVAGNWKMNGSAALAQELFKKFASKLQNDSAEVVLCPPSIYLESVRQLLEANKEALDGSLVRMGAQNLSQHDFGAYTGEVSGQMLKDCGCRYVIIGHSERRRMYGETSNIVAEKFAAAQKHGLTPILCVGESGPAREARRTFEVIAEELDIVIQKNGTMAFDNAIIAYEPLWAVGTGKSATPEQAQEVHAFIRKRLSEVSPFIGENIRILYGGSVTPSNAADLFAQPDVDGGLIGGASLNSSEFLSLCTIAMSA.

11–13 (NWK) is a substrate binding site. His-103 functions as the Electrophile in the catalytic mechanism. Residue Glu-175 is the Proton acceptor of the active site. Substrate contacts are provided by residues Gly-181, Ser-220, and 241-242 (GG).

This sequence belongs to the triosephosphate isomerase family. In terms of assembly, homodimer.

Its subcellular location is the cytoplasm. The enzyme catalyses D-glyceraldehyde 3-phosphate = dihydroxyacetone phosphate. It participates in carbohydrate biosynthesis; gluconeogenesis. Its pathway is carbohydrate degradation; glycolysis; D-glyceraldehyde 3-phosphate from glycerone phosphate: step 1/1. Functionally, involved in the gluconeogenesis. Catalyzes stereospecifically the conversion of dihydroxyacetone phosphate (DHAP) to D-glyceraldehyde-3-phosphate (G3P). The polypeptide is Triosephosphate isomerase (Shewanella sp. (strain MR-4)).